Here is a 440-residue protein sequence, read N- to C-terminus: Histidinol dehydrogenase homolog 2 (440 aa).

Residue H265 participates in Zn(2+) binding. Active-site proton acceptor residues include E333 and H334. H426 lines the Zn(2+) pocket.

Belongs to the histidinol dehydrogenase family. Requires Zn(2+) as cofactor.

In Mesorhizobium japonicum (strain LMG 29417 / CECT 9101 / MAFF 303099) (Mesorhizobium loti (strain MAFF 303099)), this protein is Histidinol dehydrogenase homolog 2.